The primary structure comprises 475 residues: Probable proline--tRNA ligase, mitochondrial (475 aa).

The N-terminal 29 residues, 1–29 (MEGLLTRCRALPALATCSRQLSGYVPCRF), are a transit peptide targeting the mitochondrion.

Belongs to the class-II aminoacyl-tRNA synthetase family.

It localises to the mitochondrion matrix. It catalyses the reaction tRNA(Pro) + L-proline + ATP = L-prolyl-tRNA(Pro) + AMP + diphosphate. Functionally, mitochondrial aminoacyl-tRNA synthetase that catalyzes the specific attachment of the proline amino acid (aa) to the homologous transfer RNA (tRNA), further participating in protein synthesis. The reaction occurs in a two steps: proline is first activated by ATP to form Pro-AMP and then transferred to the acceptor end of tRNA(Pro). This chain is Probable proline--tRNA ligase, mitochondrial, found in Homo sapiens (Human).